The following is a 335-amino-acid chain: Ketol-acid reductoisomerase (NADP(+)) 2 (335 aa).

The 180-residue stretch at 1–180 folds into the KARI N-terminal Rossmann domain; it reads MKTYYEQDAN…GCTRAGVIET (180 aa). NADP(+) contacts are provided by residues 24 to 27, Arg-47, Ser-51, and 81 to 84; these read YGSQ and DEQQ. The active site involves His-106. Gly-132 is an NADP(+) binding site. The KARI C-terminal knotted domain maps to 181–326; the sequence is TFQEETETDL…EELREMMSWI (146 aa). Mg(2+) is bound by residues Asp-189, Glu-193, Glu-225, and Glu-229. Ser-250 contributes to the substrate binding site.

Belongs to the ketol-acid reductoisomerase family. It depends on Mg(2+) as a cofactor.

The enzyme catalyses (2R)-2,3-dihydroxy-3-methylbutanoate + NADP(+) = (2S)-2-acetolactate + NADPH + H(+). It carries out the reaction (2R,3R)-2,3-dihydroxy-3-methylpentanoate + NADP(+) = (S)-2-ethyl-2-hydroxy-3-oxobutanoate + NADPH + H(+). The protein operates within amino-acid biosynthesis; L-isoleucine biosynthesis; L-isoleucine from 2-oxobutanoate: step 2/4. It functions in the pathway amino-acid biosynthesis; L-valine biosynthesis; L-valine from pyruvate: step 2/4. Functionally, involved in the biosynthesis of branched-chain amino acids (BCAA). Catalyzes an alkyl-migration followed by a ketol-acid reduction of (S)-2-acetolactate (S2AL) to yield (R)-2,3-dihydroxy-isovalerate. In the isomerase reaction, S2AL is rearranged via a Mg-dependent methyl migration to produce 3-hydroxy-3-methyl-2-ketobutyrate (HMKB). In the reductase reaction, this 2-ketoacid undergoes a metal-dependent reduction by NADPH to yield (R)-2,3-dihydroxy-isovalerate. This is Ketol-acid reductoisomerase (NADP(+)) 2 from Bacillus anthracis.